Here is a 195-residue protein sequence, read N- to C-terminus: HTH-type transcriptional regulator BetI (195 aa).

The HTH tetR-type domain occupies 8-68; sequence SIRRRQLIDA…ATMRDITSQL (61 aa). The segment at residues 31–50 is a DNA-binding region (H-T-H motif); that stretch reads TIAQIARRAGVSTGIISHYF.

It functions in the pathway amine and polyamine biosynthesis; betaine biosynthesis via choline pathway [regulation]. Repressor involved in the biosynthesis of the osmoprotectant glycine betaine. It represses transcription of the choline transporter BetT and the genes of BetAB involved in the synthesis of glycine betaine. The protein is HTH-type transcriptional regulator BetI of Escherichia coli O8 (strain IAI1).